Reading from the N-terminus, the 137-residue chain is Fluoride-specific ion channel FluC 1 (137 aa).

4 helical membrane passes run 3–23 (PLVV…RLVL), 42–62 (INVT…GHGL), 69–89 (ILGT…YEAV), and 107–127 (MMFL…LAVA). Residues G76 and T79 each contribute to the Na(+) site.

Belongs to the fluoride channel Fluc/FEX (TC 1.A.43) family.

Its subcellular location is the cell membrane. The catalysed reaction is fluoride(in) = fluoride(out). Its activity is regulated as follows. Na(+) is not transported, but it plays an essential structural role and its presence is essential for fluoride channel function. Fluoride-specific ion channel. Important for reducing fluoride concentration in the cell, thus reducing its toxicity. This chain is Fluoride-specific ion channel FluC 1, found in Leifsonia xyli subsp. xyli (strain CTCB07).